Consider the following 356-residue polypeptide: Glutamine synthetase cytosolic isozyme 1-1 (356 aa).

The GS beta-grasp domain maps to 19-99; the sequence is IIAEYIWIGG…VMCDCYTPAG (81 aa). The 251-residue stretch at 106–356 folds into the GS catalytic domain; it reads KRHNAAKIFS…IAETTIIWKP (251 aa).

The protein belongs to the glutamine synthetase family. Homooctamer. As to expression, highly expressed in leaf blades, at intermediate levels in spikelets (rice flower) and at lower levels in roots.

The protein resides in the cytoplasm. The enzyme catalyses L-glutamate + NH4(+) + ATP = L-glutamine + ADP + phosphate + H(+). High-affinity glutamine synthetase involved in ammonium assimilation. Seems to be a major component of the cytosolic glutamine synthetic pathway in leaf blades. Plays an important role in maintaining carbon and nitrogen metabolic balance during ammonium assimilation in shoots and roots, thus controlling plant growth and development. Plays an important role in maintaining broad range of metabolites and transcripts involved in the maintenance of plant metabolic homeostasis and development of plastid in roots. This chain is Glutamine synthetase cytosolic isozyme 1-1, found in Oryza sativa subsp. japonica (Rice).